The sequence spans 380 residues: Protein phosphatase methylesterase 1 (380 aa).

Positions 1–38 (MSALEKSMHLGRLPSRPPLPGSGGSQSGAKMRMGPGRK) are disordered. At Ser15 the chain carries Phosphoserine. Asymmetric dimethylarginine; alternate is present on Arg16. Residue Arg16 is modified to Omega-N-methylarginine; alternate. The residue at position 42 (Ser42) is a Phosphoserine. Residues Ser156 and Asp181 contribute to the active site. The span at 255-265 (IEEEEEDEEGS) shows a compositional bias: acidic residues. The disordered stretch occupies residues 255 to 280 (IEEEEEDEEGSESVNKRKKEDDMETK). Residues 268–280 (VNKRKKEDDMETK) are compositionally biased toward basic and acidic residues. The active site involves His349.

The protein belongs to the AB hydrolase superfamily. In terms of assembly, binds PPP2CA and PPP2CB. Post-translationally, phosphorylated by SIK1 following increases in intracellular sodium, leading to dissociation from the protein phosphatase 2A (PP2A) complex and subsequent dephosphorylation of sodium/potassium-transporting ATPase ATP1A1.

The catalysed reaction is [phosphatase 2A protein]-C-terminal L-leucine methyl ester + H2O = [phosphatase 2A protein]-C-terminal L-leucine + methanol + H(+). Demethylates proteins that have been reversibly carboxymethylated. Demethylates PPP2CB (in vitro) and PPP2CA. Binding to PPP2CA displaces the manganese ion and inactivates the enzyme. The polypeptide is Protein phosphatase methylesterase 1 (PPME1) (Bos taurus (Bovine)).